Reading from the N-terminus, the 204-residue chain is MSSGNFQLLAGLGNPGSKYTSTRHNVGFMALERLAKKESVQFAMNKKIFGHIANIEIGANKRKLLMPNTYMNESGRSISAAIKWFDLEINQILIFVDDMDLPLGKLRFREGGGSGGHNGLKDIIKHLGSQDFCRLRIGIGPPSINQGDRKQKTIPHVLGKFDQAESKVITKVLDKVIKGLEVIEQYGLVKGTSFLNSSLTATDG.

TRNA is bound at residue tyrosine 19. Catalysis depends on histidine 24, which acts as the Proton acceptor. Residues tyrosine 70, asparagine 72, and asparagine 118 each coordinate tRNA.

Belongs to the PTH family. As to quaternary structure, monomer.

The protein localises to the cytoplasm. It carries out the reaction an N-acyl-L-alpha-aminoacyl-tRNA + H2O = an N-acyl-L-amino acid + a tRNA + H(+). Functionally, hydrolyzes ribosome-free peptidyl-tRNAs (with 1 or more amino acids incorporated), which drop off the ribosome during protein synthesis, or as a result of ribosome stalling. In terms of biological role, catalyzes the release of premature peptidyl moieties from peptidyl-tRNA molecules trapped in stalled 50S ribosomal subunits, and thus maintains levels of free tRNAs and 50S ribosomes. This chain is Peptidyl-tRNA hydrolase, found in Prochlorococcus marinus (strain SARG / CCMP1375 / SS120).